Reading from the N-terminus, the 261-residue chain is 3-methyl-2-oxobutanoate hydroxymethyltransferase (261 aa).

D44 and D83 together coordinate Mg(2+). 3-methyl-2-oxobutanoate contacts are provided by residues 44–45 (DS), D83, and K113. Residue E115 participates in Mg(2+) binding. The active-site Proton acceptor is E183.

This sequence belongs to the PanB family. As to quaternary structure, homodecamer; pentamer of dimers. Requires Mg(2+) as cofactor.

It localises to the cytoplasm. The catalysed reaction is 3-methyl-2-oxobutanoate + (6R)-5,10-methylene-5,6,7,8-tetrahydrofolate + H2O = 2-dehydropantoate + (6S)-5,6,7,8-tetrahydrofolate. Its pathway is cofactor biosynthesis; (R)-pantothenate biosynthesis; (R)-pantoate from 3-methyl-2-oxobutanoate: step 1/2. Its function is as follows. Catalyzes the reversible reaction in which hydroxymethyl group from 5,10-methylenetetrahydrofolate is transferred onto alpha-ketoisovalerate to form ketopantoate. The protein is 3-methyl-2-oxobutanoate hydroxymethyltransferase of Cyanothece sp. (strain PCC 7425 / ATCC 29141).